Consider the following 304-residue polypeptide: Glutaminase (304 aa).

Substrate contacts are provided by serine 63, asparagine 114, glutamate 158, asparagine 165, tyrosine 189, tyrosine 240, and valine 258.

It belongs to the glutaminase family. Homotetramer.

It carries out the reaction L-glutamine + H2O = L-glutamate + NH4(+). The polypeptide is Glutaminase (Shewanella oneidensis (strain ATCC 700550 / JCM 31522 / CIP 106686 / LMG 19005 / NCIMB 14063 / MR-1)).